A 154-amino-acid chain; its full sequence is UPF0547 protein C16orf87 homolog (154 aa).

The segment at 46 to 119 is disordered; sequence HPEKAPSSTE…KHEEEREKQE (74 aa). Positions 68–84 are enriched in basic and acidic residues; the sequence is VRREKINSTVNKDLENR. A Phosphoserine modification is found at Ser-91. Residues 104–132 adopt a coiled-coil conformation; that stretch reads KSASAKKHEEEREKQEKEIDIYANLSDEK. Residues 109–119 show a composition bias toward basic and acidic residues; the sequence is KKHEEEREKQE.

The protein belongs to the UPF0547 family.

This Bos taurus (Bovine) protein is UPF0547 protein C16orf87 homolog.